The primary structure comprises 479 residues: UPF0164 protein TP_0865 (479 aa).

The N-terminal stretch at 1-49 (MVRMRRRRACSSGGACGCAAVRGARSFLSVRVLGMRIGMSALCLAPLFA) is a signal peptide.

It belongs to the UPF0164 family.

In Treponema pallidum (strain Nichols), this protein is UPF0164 protein TP_0865.